Here is a 361-residue protein sequence, read N- to C-terminus: Aurora kinase B-A (361 aa).

The Protein kinase domain occupies 93–343; the sequence is FDIGRPLGKG…LKGVMEHPWV (251 aa). ATP is bound by residues 99 to 107 and K122; that span reads LGKGKFGNV. Catalysis depends on D216, which acts as the Proton acceptor.

Belongs to the protein kinase superfamily. Ser/Thr protein kinase family. Aurora subfamily. As to quaternary structure, component of the CPC at least composed of survivin/birc5, incenp, cdca8/borealin and/or cdca9/dasra-A, and aurkb/aurora-B. Interacts directly (via N-terminus and kinase domain) with incenp (via C terminus), and may weakly interact (via N-terminus) with birc5.1 to stabilize the complex. Interacts with mtus1. The cofactor is Mg(2+). Post-translationally, phosphorylated, stimulates kinase activity.

The protein resides in the nucleus. Its subcellular location is the chromosome. It catalyses the reaction L-seryl-[protein] + ATP = O-phospho-L-seryl-[protein] + ADP + H(+). It carries out the reaction L-threonyl-[protein] + ATP = O-phospho-L-threonyl-[protein] + ADP + H(+). With respect to regulation, kinase activity is stimulated by both birc5/survivin-binding and cell-cycle specific phosphorylation. Functionally, serine/threonine-protein kinase component of the chromosomal passenger complex (CPC), a complex that acts as a key regulator of mitosis. The CPC complex has essential functions at the centromere in ensuring correct chromosome alignment and segregation and is required for chromatin-induced microtubule stabilization and spindle assembly. Involved in the bipolar attachment of spindle microtubules to kinetochores and is a key regulator for the onset of cytokinesis during mitosis. Required for central/midzone spindle assembly and cleavage furrow formation. Key component of the cytokinesis checkpoint, a process required to delay abscission to prevent both premature resolution of intercellular chromosome bridges and accumulation of DNA damage. Phosphorylates 'Ser-10' of histone H3 during mitosis. The chain is Aurora kinase B-A (aurkb-a) from Xenopus laevis (African clawed frog).